A 402-amino-acid chain; its full sequence is Glutamate N-acetyltransferase (402 aa).

Thr-151, Lys-178, Thr-189, Glu-267, Asn-397, and Thr-402 together coordinate substrate. The active-site Nucleophile is Thr-189.

It belongs to the ArgJ family. Heterotetramer of two alpha and two beta chains.

The protein resides in the cytoplasm. It catalyses the reaction N(2)-acetyl-L-ornithine + L-glutamate = N-acetyl-L-glutamate + L-ornithine. The protein operates within amino-acid biosynthesis; L-arginine biosynthesis; L-ornithine and N-acetyl-L-glutamate from L-glutamate and N(2)-acetyl-L-ornithine (cyclic): step 1/1. Catalyzes the transfer of the acetyl group from N(2)-acetylornithine to glutamate, forming N-acetylglutamate and L-ornithine. The chain is Glutamate N-acetyltransferase from Methanothermobacter thermautotrophicus (strain ATCC 29096 / DSM 1053 / JCM 10044 / NBRC 100330 / Delta H) (Methanobacterium thermoautotrophicum).